The primary structure comprises 405 residues: Argininosuccinate synthase (405 aa).

Residues 10-18 and Ala-37 each bind ATP; that span reads AFSGGLDTS. Positions 90 and 95 each coordinate L-citrulline. Gly-120 contacts ATP. Thr-122, Asn-126, and Asp-127 together coordinate L-aspartate. Asn-126 is a binding site for L-citrulline. 5 residues coordinate L-citrulline: Arg-130, Ser-181, Ser-190, Glu-266, and Tyr-278.

The protein belongs to the argininosuccinate synthase family. Type 1 subfamily. In terms of assembly, homotetramer.

It is found in the cytoplasm. It catalyses the reaction L-citrulline + L-aspartate + ATP = 2-(N(omega)-L-arginino)succinate + AMP + diphosphate + H(+). The protein operates within amino-acid biosynthesis; L-arginine biosynthesis; L-arginine from L-ornithine and carbamoyl phosphate: step 2/3. The protein is Argininosuccinate synthase of Rhizorhabdus wittichii (strain DSM 6014 / CCUG 31198 / JCM 15750 / NBRC 105917 / EY 4224 / RW1) (Sphingomonas wittichii).